Reading from the N-terminus, the 98-residue chain is RING finger protein Z (98 aa).

The span at 1–10 shows a compositional bias: basic and acidic residues; that stretch reads MGNTKTKDRQ. The interval 1–26 is disordered; the sequence is MGNTKTKDRQYQSNSSQPTNTSAPVL. Residue G2 is the site of N-myristoyl glycine; by host attachment. The span at 11–23 shows a compositional bias: polar residues; sequence YQSNSSQPTNTSA. The RING-type; atypical zinc-finger motif lies at 41–77; the sequence is CRCCWFADTNLVNCSNHYLCLKCLNTMLRRSNLCDIC. Residues 91-94 carry the PTAP/PSAP motif motif; that stretch reads PSAP.

Belongs to the arenaviridae Z protein family. As to quaternary structure, interacts with protein NP; this interaction probably directs the encapsidated genome to budding sites. Interacts (via RING domain) with polymerase L; this interaction inhibits viral transcription and replication, Z partially blocks the product exit tunnel for the releasing nascent RNA product. Interacts with the glycoprotein complex; this interaction plays a role in virion budding. Interacts with host eIF4E; this interaction results in eIF4E reduced affinity for its substrate, the 5'-m7 G cap structure. Interacts (via late-budding domain) with host TSG101; this interaction is essential for budding and release of viral particles. Interacts with host RPLP0; this interaction may serve to load ribosome-like particles inside the virion. Interacts with host PML; this interaction induces PML bodies redistribution in the cytoplasm upon viral infection. Myristoylation is required for the role of RING finger protein Z in assembly and budding.

The protein localises to the virion. Its subcellular location is the host cytoplasm. It is found in the host perinuclear region. It localises to the host cell membrane. Functionally, plays a crucial role in virion assembly and budding. Expressed late in the virus life cycle, it acts as an inhibitor of viral transcription and RNA synthesis by interacting with the viral polymerase L. Presumably recruits the NP encapsidated genome to cellular membranes at budding sites via direct interaction with NP. Plays critical roles in the final steps of viral release by interacting with host TSG101, a member of the vacuolar protein-sorting pathway and using other cellular host proteins involved in vesicle formation pathway. The budding of the virus progeny occurs after association of protein Z with the viral glycoprotein complex SSP-GP1-GP2 at the cell periphery, step that requires myristoylation of protein Z. Also selectively represses protein production by associating with host eIF4E. In cell-based minigenome assay, has an inhibitory effect on the ribonucleoprotein machinery (vRNP), which is responsible for the replication and transcription of the viral genome. This is RING finger protein Z from Chapare mammarenavirus (isolate Human/Bolivia/810419/2003).